Reading from the N-terminus, the 401-residue chain is Large ribosomal subunit protein uL4B (401 aa).

The span at 351–373 (IKAKEKKPDDGKPKAKKPLDAKT) shows a compositional bias: basic and acidic residues. Residues 351–401 (IKAKEKKPDDGKPKAKKPLDAKTKMIKLAKAKKRQARAEAKTAEAKTAESK) form a disordered region. The segment covering 374–385 (KMIKLAKAKKRQ) has biased composition (basic residues). The span at 386–401 (ARAEAKTAEAKTAESK) shows a compositional bias: basic and acidic residues.

This sequence belongs to the universal ribosomal protein uL4 family. In terms of assembly, component of the large ribosomal subunit.

Its subcellular location is the cytoplasm. In terms of biological role, component of the large ribosomal subunit. The ribosome is a large ribonucleoprotein complex responsible for the synthesis of proteins in the cell. The chain is Large ribosomal subunit protein uL4B (rpl4-b) from Xenopus laevis (African clawed frog).